We begin with the raw amino-acid sequence, 824 residues long: RelA-associated inhibitor (824 aa).

N-acetylmethionine is present on M1. Disordered regions lie at residues S48–K87 and R99–L271. S84, S100, S102, S110, S113, S119, and S120 each carry phosphoserine. A Phosphothreonine modification is found at T123. Position 134 is a phosphoserine (S134). Omega-N-methylarginine occurs at positions 137, 142, 144, 160, 167, and 180. Phosphoserine occurs at positions 183, 187, and 203. R205 carries the post-translational modification Omega-N-methylarginine. At T275 the chain carries Phosphothreonine. Phosphoserine is present on S279. Disordered regions lie at residues S291–P370 and R388–P501. The residue at position 307 (T307) is a Phosphothreonine. S315, S331, and S338 each carry phosphoserine. Position 340 is a phosphothreonine (T340). Residues Q359–P370 are compositionally biased toward low complexity. Residues A400–Q424 are compositionally biased toward pro residues. Residues M425–Q440 are compositionally biased toward low complexity. Phosphoserine is present on residues S522, S563, and S593. A disordered region spans residues F547 to R614. Residues P575 to Q597 show a composition bias toward pro residues. 2 ANK repeats span residues E655 to S684 and H688 to A717. Positions M754–R816 constitute an SH3 domain.

Belongs to the iASPP family. In terms of assembly, interacts with TP63 and TP73. Interacts with RELA NF-kappa-B subunit and with SP1 via its C-terminal part. Interacts (via SH3 domain and ANK repeats) with p53/TP53; the interaction inhibits pro-apoptotic activity of p53/TP53. Most abundant in skin with high levels also found in heart, testis and stomach. In 15.5 dpc embryonic heart, expressed at higher levels in atria than ventricles.

It is found in the cytoplasm. The protein resides in the nucleus. In terms of biological role, regulator that plays a central role in regulation of apoptosis and transcription via its interaction with NF-kappa-B and p53/TP53 proteins. Inhibits p53/TP53 function, possibly by preventing the association between p53/TP53 and ASPP1 or ASPP2, and therefore suppressing the subsequent activation of apoptosis. Is involved in NF-kappa-B dependent negative regulation of inflammatory response. The chain is RelA-associated inhibitor from Mus musculus (Mouse).